The following is a 548-amino-acid chain: Protein swallow (548 aa).

Disordered stretches follow at residues 67–109, 184–206, and 358–428; these read AKTC…GRSS, NCQTHSNSDSNYNSNSNNSSSSF, and FSSV…ELIS. Residues 79–91 show a composition bias toward acidic residues; it reads QEDEDDYDEDVDG. The segment covering 189-205 has biased composition (low complexity); it reads SNSDSNYNSNSNNSSSS. A phosphoserine mark is found at serine 362 and serine 368. The span at 388 to 402 shows a compositional bias: polar residues; sequence APNNSETSQPSSNDS. Residues 406-420 are compositionally biased toward basic and acidic residues; sequence VEAHEEERPSSRRQW. Phosphoserine is present on residues serine 463, serine 471, serine 475, serine 483, serine 485, and serine 487.

As to quaternary structure, may be a homo- or heterodimer.

The protein resides in the nucleus. Its function is as follows. Has a role in localizing bicoid mRNA at the anterior margin of the oocyte during oogenesis, and a poorly characterized role in nuclear divisions in early embryogenesis. The protein is Protein swallow (swa) of Drosophila melanogaster (Fruit fly).